The primary structure comprises 268 residues: tRNA pseudouridine synthase A (268 aa).

Aspartate 63 (nucleophile) is an active-site residue. Tyrosine 122 provides a ligand contact to substrate.

It belongs to the tRNA pseudouridine synthase TruA family. In terms of assembly, homodimer.

The catalysed reaction is uridine(38/39/40) in tRNA = pseudouridine(38/39/40) in tRNA. Its function is as follows. Formation of pseudouridine at positions 38, 39 and 40 in the anticodon stem and loop of transfer RNAs. This Treponema denticola (strain ATCC 35405 / DSM 14222 / CIP 103919 / JCM 8153 / KCTC 15104) protein is tRNA pseudouridine synthase A.